The chain runs to 299 residues: uncharacterized protein (299 aa).

A helical transmembrane segment spans residues 25-45 (LLYFFKSLAMILFFIFFSLTS).

The protein resides in the membrane. This is an uncharacterized protein from Rickettsia prowazekii (strain Madrid E).